Reading from the N-terminus, the 163-residue chain is MLKKCVWLAVALCLCLWQFTMGTALAAELTPEVLTVPLNSEGKTITLTEKQYLEGKRLFQYACASCHVGGITKTNPSLDLRTETLALATPPRDNIEGLVDYMKNPTTYDGEQEIAEVHPSLRSADIFPKMRNLTEKDLVAIAGHILVEPKILGDKWGGGKVYY.

An N-terminal signal peptide occupies residues 1–26; the sequence is MLKKCVWLAVALCLCLWQFTMGTALA. Residues histidine 67 and histidine 118 each coordinate heme c.

The protein belongs to the cytochrome c family. PsbV subfamily. PSII is composed of 1 copy each of membrane proteins PsbA, PsbB, PsbC, PsbD, PsbE, PsbF, PsbH, PsbI, PsbJ, PsbK, PsbL, PsbM, PsbT, PsbX, PsbY, PsbZ, Psb30/Ycf12, peripheral proteins PsbO, CyanoQ (PsbQ), PsbU, PsbV and a large number of cofactors. It forms dimeric complexes. It depends on heme c as a cofactor.

The protein resides in the cellular thylakoid membrane. In terms of biological role, one of the extrinsic, lumenal subunits of photosystem II (PSII). PSII is a light-driven water plastoquinone oxidoreductase, using light energy to abstract electrons from H(2)O, generating a proton gradient subsequently used for ATP formation. The extrinsic proteins stabilize the structure of photosystem II oxygen-evolving complex (OEC), the ion environment of oxygen evolution and protect the OEC against heat-induced inactivation. Low-potential cytochrome c that plays a role in the OEC of PSII. The sequence is that of Photosystem II extrinsic protein V from Thermosynechococcus vestitus (strain NIES-2133 / IAM M-273 / BP-1).